Here is a 615-residue protein sequence, read N- to C-terminus: Proteasome-associated ATPase (615 aa).

A disordered region spans residues 1–36; that stretch reads MSESERPEAGDGTDALGASPDTPLSSEDAAELEQLR. Residues 25 to 102 are a coiled coil; it reads SSEDAAELEQ…LREEVDRLGQ (78 aa). ATP is bound at residue 302–307; the sequence is GCGKTL. Residues 614–615 form a docks into pockets in the proteasome alpha-ring region; that stretch reads YL.

The protein belongs to the AAA ATPase family. In terms of assembly, homohexamer. Assembles into a hexameric ring structure that caps the 20S proteasome core. Strongly interacts with the prokaryotic ubiquitin-like protein Pup through a hydrophobic interface; the interacting region of ARC lies in its N-terminal coiled-coil domain. There is one Pup binding site per ARC hexamer ring. Upon ATP-binding, the C-terminus of ARC interacts with the alpha-rings of the proteasome core, possibly by binding to the intersubunit pockets.

It functions in the pathway protein degradation; proteasomal Pup-dependent pathway. Functionally, ATPase which is responsible for recognizing, binding, unfolding and translocation of pupylated proteins into the bacterial 20S proteasome core particle. May be essential for opening the gate of the 20S proteasome via an interaction with its C-terminus, thereby allowing substrate entry and access to the site of proteolysis. Thus, the C-termini of the proteasomal ATPase may function like a 'key in a lock' to induce gate opening and therefore regulate proteolysis. The polypeptide is Proteasome-associated ATPase (Mycolicibacterium gilvum (strain PYR-GCK) (Mycobacterium gilvum (strain PYR-GCK))).